The chain runs to 130 residues: MRHGHGLRKLNRTSSHRLAMLKNMMNSLIEHEAIKTTVPKAKELRRVIEPMITLAKVDTVANRRLAFDRLRDRDSVTKLFNELGPRFAKRPGGYTRILKMGFRVGDNAPMAFVELVERAEEGAAEAKAAE.

It belongs to the bacterial ribosomal protein bL17 family. As to quaternary structure, part of the 50S ribosomal subunit. Contacts protein L32.

This Delftia acidovorans (strain DSM 14801 / SPH-1) protein is Large ribosomal subunit protein bL17.